Reading from the N-terminus, the 30-residue chain is Trypsin inhibitor 1 (30 aa).

3 disulfide bridges follow: Cys4–Cys21, Cys11–Cys23, and Cys17–Cys29.

Belongs to the protease inhibitor I7 (squash-type serine protease inhibitor) family.

Its subcellular location is the secreted. Inhibits trypsin. The sequence is that of Trypsin inhibitor 1 from Momordica charantia (Bitter gourd).